Here is a 160-residue protein sequence, read N- to C-terminus: Transcription antitermination protein NusB (160 aa).

The protein belongs to the NusB family.

In terms of biological role, involved in transcription antitermination. Required for transcription of ribosomal RNA (rRNA) genes. Binds specifically to the boxA antiterminator sequence of the ribosomal RNA (rrn) operons. This chain is Transcription antitermination protein NusB, found in Rhizobium johnstonii (strain DSM 114642 / LMG 32736 / 3841) (Rhizobium leguminosarum bv. viciae).